A 570-amino-acid chain; its full sequence is Periplasmic trehalase (570 aa).

The signal sequence occupies residues 1–34 (MIPPEIRRSVLLQKAIKLALAGTLLTFASFSATA). Residues Arg-159, 166–167 (WD), Asn-203, 212–214 (RSQ), 284–286 (RPE), and Gly-317 contribute to the substrate site. Catalysis depends on proton donor/acceptor residues Asp-319 and Glu-503. Glu-518 serves as a coordination point for substrate. The segment at 544–570 (KPCDSVPSTRPASLSATPTKTPSAATQ) is disordered. Positions 554–570 (PASLSATPTKTPSAATQ) are enriched in low complexity.

The protein belongs to the glycosyl hydrolase 37 family. Monomer.

The protein resides in the periplasm. The catalysed reaction is alpha,alpha-trehalose + H2O = alpha-D-glucose + beta-D-glucose. In terms of biological role, provides the cells with the ability to utilize trehalose at high osmolarity by splitting it into glucose molecules that can subsequently be taken up by the phosphotransferase-mediated uptake system. The protein is Periplasmic trehalase of Salmonella schwarzengrund (strain CVM19633).